The chain runs to 372 residues: Queuine tRNA-ribosyltransferase (372 aa).

Asp-89 acts as the Proton acceptor in catalysis. Substrate contacts are provided by residues 89–93, Asp-161, and Gly-232; that span reads DSGGF. The segment at 262–268 is RNA binding; the sequence is GIGDLPS. The active-site Nucleophile is Asp-281. Residues 286-290 form an RNA binding; important for wobble base 34 recognition region; that stretch reads TKAAR. Cys-319, Cys-321, Cys-324, and His-351 together coordinate Zn(2+).

The protein belongs to the queuine tRNA-ribosyltransferase family. As to quaternary structure, homodimer. Within each dimer, one monomer is responsible for RNA recognition and catalysis, while the other monomer binds to the replacement base PreQ1. Zn(2+) is required as a cofactor.

The catalysed reaction is 7-aminomethyl-7-carbaguanine + guanosine(34) in tRNA = 7-aminomethyl-7-carbaguanosine(34) in tRNA + guanine. It participates in tRNA modification; tRNA-queuosine biosynthesis. Its function is as follows. Catalyzes the base-exchange of a guanine (G) residue with the queuine precursor 7-aminomethyl-7-deazaguanine (PreQ1) at position 34 (anticodon wobble position) in tRNAs with GU(N) anticodons (tRNA-Asp, -Asn, -His and -Tyr). Catalysis occurs through a double-displacement mechanism. The nucleophile active site attacks the C1' of nucleotide 34 to detach the guanine base from the RNA, forming a covalent enzyme-RNA intermediate. The proton acceptor active site deprotonates the incoming PreQ1, allowing a nucleophilic attack on the C1' of the ribose to form the product. After dissociation, two additional enzymatic reactions on the tRNA convert PreQ1 to queuine (Q), resulting in the hypermodified nucleoside queuosine (7-(((4,5-cis-dihydroxy-2-cyclopenten-1-yl)amino)methyl)-7-deazaguanosine). The chain is Queuine tRNA-ribosyltransferase from Chlamydia caviae (strain ATCC VR-813 / DSM 19441 / 03DC25 / GPIC) (Chlamydophila caviae).